Consider the following 214-residue polypeptide: Large ribosomal subunit protein bL25 (214 aa).

The disordered stretch occupies residues 178–214; sequence VEPEEEELPETDEEGEGAEGEAAEAAEGESAEGESEE. Residues 179 to 214 are compositionally biased toward acidic residues; it reads EPEEEELPETDEEGEGAEGEAAEAAEGESAEGESEE.

It belongs to the bacterial ribosomal protein bL25 family. CTC subfamily. Part of the 50S ribosomal subunit; part of the 5S rRNA/L5/L18/L25 subcomplex. Contacts the 5S rRNA. Binds to the 5S rRNA independently of L5 and L18.

This is one of the proteins that binds to the 5S RNA in the ribosome where it forms part of the central protuberance. This chain is Large ribosomal subunit protein bL25, found in Corynebacterium jeikeium (strain K411).